Consider the following 216-residue polypeptide: Trimethylamine corrinoid protein 1 (216 aa).

Residues 1–92 (MANKEEIIAK…EMEKRKSQTK (92 aa)) form the B12-binding N-terminal domain. Positions 94 to 216 (LGTIVIGTIE…VVSKVKAALL (123 aa)) constitute a B12-binding domain. His-107 contacts methylcob(III)alamin.

The protein belongs to the methylamine corrinoid protein family. Can form a complex with MttB.

It participates in one-carbon metabolism; methanogenesis from trimethylamine. Acts probably as a methyl group carrier between MttB and either MtbA or MtaA. The chain is Trimethylamine corrinoid protein 1 (mttC1) from Methanosarcina mazei (strain ATCC BAA-159 / DSM 3647 / Goe1 / Go1 / JCM 11833 / OCM 88) (Methanosarcina frisia).